The sequence spans 70 residues: Large ribosomal subunit protein eL38 (70 aa).

It belongs to the eukaryotic ribosomal protein eL38 family.

The chain is Large ribosomal subunit protein eL38 (RPL38) from Branchiostoma belcheri (Amphioxus).